Here is a 234-residue protein sequence, read N- to C-terminus: Sugar fermentation stimulation protein homolog (234 aa).

Belongs to the SfsA family.

This is Sugar fermentation stimulation protein homolog from Shewanella putrefaciens (strain CN-32 / ATCC BAA-453).